The following is a 304-amino-acid chain: Capsid protein (304 aa).

Basic and acidic residues-rich tracts occupy residues 1 to 24 and 32 to 54; these read MGDS…REAR and FEGK…EMSL. The segment at 1–54 is disordered; sequence MGDSTKKAETAKDEGTSQERREARPLPTAADFEGKDTSENTDGRAADADGEMSL.

This sequence belongs to the potexviruses coat protein family.

It is found in the virion. Required for genome encapsidation. Forms ribonucleoprotein complexes along with TGB1 helicase and viral RNA. This is Capsid protein from Potato virus M (strain Russian) (PVM).